We begin with the raw amino-acid sequence, 464 residues long: MMLRAVFRRASIRGSSSASGLGKSLQSSRVAVSAQFHSVSATETLVPRGNHAHSFHHRSCPGCPDCSRTIINGYQGTALQRWVRPFSSDSGDVVEAVVPHMGESITDGTLAAFLKKPGDRVEADEAIAQIETDKVTIDIASPASGVIQEFLVKEGDTVEPGNKVARISTSADAVSHVAPSEKAPEKPAPKPSPPAEKPKVESTKVAEKPKAPSPPPPPPSKQSAKEPQLPPKDRERRVPMTRLRKRVATRLKDSQNTFALLTTFNEVDMTNLMKLRSQYKDAFLEKHGVKLGLMSGFIKAAVSALQHQPVVNAVIDGDDIIYRDYVDISIAVGTSKGLVVPVIRDADKMNFADIEKTINGLAKKATEGTISIDEMAGGSFTVSNGGVYGSLISTPIINPPQSAILGMHSIVQRPMVVGGSVVPRPMMYVALTYDHRLIDGREAVYFLRRIKDVVEDPQRLLLDI.

The transit peptide at 1-86 (MMLRAVFRRA…TALQRWVRPF (86 aa)) directs the protein to the mitochondrion. One can recognise a Lipoyl-binding domain in the interval 93-168 (VVEAVVPHMG…EPGNKVARIS (76 aa)). Lys-134 bears the N6-lipoyllysine mark. Residues 168-242 (STSADAVSHV…DRERRVPMTR (75 aa)) are disordered. The span at 196-210 (EKPKVESTKVAEKPK) shows a compositional bias: basic and acidic residues. Positions 211 to 220 (APSPPPPPPS) are enriched in pro residues. Catalysis depends on residues His-435 and Asp-439.

It belongs to the 2-oxoacid dehydrogenase family. In terms of assembly, forms a 24-polypeptide structural core with octahedral symmetry. (R)-lipoate serves as cofactor.

The protein localises to the mitochondrion. It carries out the reaction N(6)-[(R)-dihydrolipoyl]-L-lysyl-[protein] + succinyl-CoA = N(6)-[(R)-S(8)-succinyldihydrolipoyl]-L-lysyl-[protein] + CoA. It functions in the pathway amino-acid degradation; L-lysine degradation via saccharopine pathway; glutaryl-CoA from L-lysine: step 6/6. Functionally, the 2-oxoglutarate dehydrogenase complex catalyzes the overall conversion of 2-oxoglutarate to succinyl-CoA and CO(2). It contains multiple copies of three enzymatic components: 2-oxoglutarate dehydrogenase (E1), dihydrolipoamide succinyltransferase (E2) and lipoamide dehydrogenase (E3). In Arabidopsis thaliana (Mouse-ear cress), this protein is Dihydrolipoyllysine-residue succinyltransferase component of 2-oxoglutarate dehydrogenase complex 1, mitochondrial.